The sequence spans 358 residues: MKLTLKNLSMAIMMSTIVMGSSAMAADSNEKIVIAHRGASGYLPEHTLPAKAMAYAQGADYLEQDLVMTKDDNLVVLHDHYLDRVTDVADRFPDRARKDGRYYAIDFTLDEIKSLKFTEGFDIENGKKVQTYPGRFPMGKSDFRVHTFEEEIEFVQGLNHSTGKNIGIYPEIKAPWFHHQEGKDIAAKTLEVLKKYGYTGKDDKVYLQCFDADELKRIKNELEPKMGMELNLVQLIAYTDWNETQQKQPDGSWVNYNYDWMFKPGAMKQVAEYADGIGPDYHMLIEETSQPGNIKLTGMVQDAQQNKLVVHPYTVRSDKLPEYTPDVNQLYDALYNKAGVNGLFTDFPDKAVKFLNKE.

An N-terminal signal peptide occupies residues methionine 1–alanine 25. The 325-residue stretch at lysine 31–leucine 355 folds into the GP-PDE domain. Histidine 36 acts as the Proton acceptor in catalysis. Ca(2+)-binding residues include glutamate 63 and aspartate 65. Residue histidine 78 is the Proton donor of the active site. Residue glutamate 171 coordinates Ca(2+).

This sequence belongs to the glycerophosphoryl diester phosphodiesterase family. In terms of assembly, homodimer. Ca(2+) serves as cofactor.

It is found in the periplasm. The catalysed reaction is a sn-glycero-3-phosphodiester + H2O = an alcohol + sn-glycerol 3-phosphate + H(+). Functionally, glycerophosphodiester phosphodiesterase hydrolyzes glycerophosphodiesters into glycerol-3-phosphate (G3P) and the corresponding alcohol. This chain is Glycerophosphodiester phosphodiesterase, periplasmic (glpQ), found in Escherichia coli (strain K12).